The sequence spans 429 residues: Ribosomal RNA small subunit methyltransferase B (429 aa).

Residues 254 to 260 (CAAPGGK), Asp277, Asp303, and Asp322 each bind S-adenosyl-L-methionine. The active-site Nucleophile is Cys375. The segment at 397–419 (ALSETGTPDQPGQQNLPGGEEGD) is disordered. Over residues 400 to 412 (ETGTPDQPGQQNL) the composition is skewed to polar residues.

Belongs to the class I-like SAM-binding methyltransferase superfamily. RsmB/NOP family.

The protein localises to the cytoplasm. It carries out the reaction cytidine(967) in 16S rRNA + S-adenosyl-L-methionine = 5-methylcytidine(967) in 16S rRNA + S-adenosyl-L-homocysteine + H(+). Its function is as follows. Specifically methylates the cytosine at position 967 (m5C967) of 16S rRNA. The sequence is that of Ribosomal RNA small subunit methyltransferase B from Salmonella agona (strain SL483).